The primary structure comprises 296 residues: MADLTLCAFLTKVLCAHGGRMFLQDLRGHVELSEAKLRAVLRRAGPERFLLQEVELRDGPWDAEAEVAAGEGAGAGSGGGATACRVMAVSSARLCARYQRGECQGCDQLHLCRRHMLGKCPHRDCWSTCSLSHDIHTPINVQVLKSRGLFGLNEGQLRILLLQNDPCLFPEVCQMYNKGVDVLYGYCSLKDRCNKFHVCKSFVRGECPFQPCKRSHQLIHAATLKLLEDQELSVSSVVNFQIISVYRHKKLHKMLEEKDHSASTEQPQGLGKQGALGAVEARPFLPARAQSPRKPQ.

Position 2 is an N-acetylalanine (Ala-2). 2 C3H1-type zinc fingers span residues 111–136 (LCRR…HDIH) and 198–219 (VCKS…HQLI).

The protein is Zinc finger CCCH-type antiviral protein 1-like (Zc3hav1l) of Mus musculus (Mouse).